The following is a 322-amino-acid chain: MKVILDLLNNDPRTTQRTERPRHPEKANRPDTPMESRPAWIRVKAPGSAQWTETQRIVRENKLVTVCEEASCPNIGECWAKKHATFMIMGDTCTRACAFCNVRTGLPGPLDADEPGKVADAVAKLGLEHVVVTSVDRDDLADGGAAHFAATIAAIRAMSPATSIEILTPDFLRKHGALETVVAARPDVLNHNLETVPSKYLAVRPGARYFHSVRLLQRAKELDPRIFTKSGIMVGLGEDRSEVLQLMDDLRSADVDFLTIGQYLQPTRKHHAVMRFVPPDEFEAYEKTAYAKGFLMVSATPLTRSSHHAGDDFRKLRERRRA.

A disordered region spans residues 1–36; that stretch reads MKVILDLLNNDPRTTQRTERPRHPEKANRPDTPMES. Residues 14–34 are compositionally biased toward basic and acidic residues; it reads TTQRTERPRHPEKANRPDTPM. The [4Fe-4S] cluster site is built by Cys-67, Cys-72, Cys-78, Cys-93, Cys-97, Cys-100, and Ser-306. One can recognise a Radical SAM core domain in the interval 79–295; sequence WAKKHATFMI…EKTAYAKGFL (217 aa).

Belongs to the radical SAM superfamily. Lipoyl synthase family. The cofactor is [4Fe-4S] cluster.

It localises to the cytoplasm. It catalyses the reaction [[Fe-S] cluster scaffold protein carrying a second [4Fe-4S](2+) cluster] + N(6)-octanoyl-L-lysyl-[protein] + 2 oxidized [2Fe-2S]-[ferredoxin] + 2 S-adenosyl-L-methionine + 4 H(+) = [[Fe-S] cluster scaffold protein] + N(6)-[(R)-dihydrolipoyl]-L-lysyl-[protein] + 4 Fe(3+) + 2 hydrogen sulfide + 2 5'-deoxyadenosine + 2 L-methionine + 2 reduced [2Fe-2S]-[ferredoxin]. It functions in the pathway protein modification; protein lipoylation via endogenous pathway; protein N(6)-(lipoyl)lysine from octanoyl-[acyl-carrier-protein]: step 2/2. Catalyzes the radical-mediated insertion of two sulfur atoms into the C-6 and C-8 positions of the octanoyl moiety bound to the lipoyl domains of lipoate-dependent enzymes, thereby converting the octanoylated domains into lipoylated derivatives. The protein is Lipoyl synthase 2 of Bradyrhizobium diazoefficiens (strain JCM 10833 / BCRC 13528 / IAM 13628 / NBRC 14792 / USDA 110).